Here is a 398-residue protein sequence, read N- to C-terminus: S-adenosylmethionine synthase (398 aa).

Histidine 17 contacts ATP. Position 19 (aspartate 19) interacts with Mg(2+). K(+) is bound at residue glutamate 45. The L-methionine site is built by glutamate 58 and glutamine 101. A flexible loop region spans residues 101-111 (QSPDIAQGVDK). ATP is bound by residues 176 to 178 (DGK), 243 to 244 (RF), aspartate 252, 258 to 259 (RK), and lysine 279. Aspartate 252 contributes to the L-methionine binding site. L-methionine is bound at residue lysine 283.

This sequence belongs to the AdoMet synthase family. In terms of assembly, homotetramer; dimer of dimers. Mg(2+) serves as cofactor. K(+) is required as a cofactor.

The protein localises to the cytoplasm. It carries out the reaction L-methionine + ATP + H2O = S-adenosyl-L-methionine + phosphate + diphosphate. It functions in the pathway amino-acid biosynthesis; S-adenosyl-L-methionine biosynthesis; S-adenosyl-L-methionine from L-methionine: step 1/1. Catalyzes the formation of S-adenosylmethionine (AdoMet) from methionine and ATP. The overall synthetic reaction is composed of two sequential steps, AdoMet formation and the subsequent tripolyphosphate hydrolysis which occurs prior to release of AdoMet from the enzyme. This chain is S-adenosylmethionine synthase, found in Staphylococcus aureus (strain Mu3 / ATCC 700698).